Here is a 192-residue protein sequence, read N- to C-terminus: Virion infectivity factor (192 aa).

The interval 14–17 is interaction with host APOBEC3F; F1-box; that stretch reads DRMR. The tract at residues 40–44 is interaction with host APOBEC3G; G-box; that stretch reads YRHHY. The tract at residues 54-72 is interaction with host APOBEC3F and APOBEC3G; FG-box; that stretch reads EVHIPLGEARLVVTTYWGL. An interaction with host APOBEC3F; F2-box region spans residues 74 to 79; the sequence is TGEKEW. The interval 75–114 is RNA-binding; the sequence is GEKEWHLGQGVSIEWRKRRYSTQVDPGLADQLIHMYYFDC. The residue at position 96 (T96) is a Phosphothreonine; by host MAP4K1. Zn(2+) is bound by residues H108, C114, C133, and H139. The HCCH motif signature appears at 108–139; that stretch reads HMYYFDCFAESAIRKAILGHIVSPSCEYQAGH. Position 144 is a phosphoserine; by host (S144). A BC-box-like motif motif is present at residues 144–153; the sequence is SLQYLALAAL. Positions 151 to 164 are multimerization; that stretch reads AALIAPKKIKPPLP. Residues 151–180 form an SOCS box-like region; the sequence is AALIAPKKIKPPLPSVRKLTEDRWNKPQKT. S165 is subject to Phosphoserine; by host MAP4K1. Residues 165 to 192 are disordered; the sequence is SVRKLTEDRWNKPQKTKGRRGSHTMNGH. The tract at residues 171–172 is membrane association; that stretch reads ED. Residues 176–186 are compositionally biased toward basic residues; sequence KPQKTKGRRGS. A Phosphothreonine; by host modification is found at T188.

It belongs to the primate lentivirus group Vif protein family. Homomultimer; in vitro and presumably in vivo. Interacts with viral RNA and Pr55Gag precursor; these interactions mediate Vif incorporation into the virion. Interacts with the viral reverse transcriptase. Forms cullin-5-RING E3 ubiquitin-protein ligase complex (ECS complex) by interacting with host CUL5, RBX2, elongin BC complex (ELOB and ELOC) and CBFB/CBF-beta. Within the ECS complex, Vif interacts directly with host CUL5, ELOC and APOBEC (APOBEC3F and APOBEC3G) substrates. The ECS complex also contains some single-stranded RNA (ssRNA) that acts as a glue that bridges Vif with APOBEC (APOBEC3F and APOBEC3G) substrates. Interacts with host UBCE7IP1 isoform 3/ZIN and possibly with SAT. Interacts with host tyrosine kinases HCK and FYN; these interactions may decrease level of phosphorylated APOBEC3G incorporation into virions. Interacts with host ABCE1; this interaction may play a role in protecting viral RNA from damage during viral assembly. Interacts with host MDM2; this interaction targets Vif for degradation by the proteasome. In terms of processing, processed in virion by the viral protease. Post-translationally, highly phosphorylated on serine and threonine residues. Polyubiquitinated and degraded by the proteasome in the presence of APOBEC3G.

The protein resides in the host cytoplasm. The protein localises to the host cell membrane. It is found in the virion. In terms of biological role, counteracts the innate antiviral activity of host APOBEC3F and APOBEC3G by promoting their ubiquitination and degradation. Acts as a substrate recognition component of an E3 ubiquitin-protein ligase complex: mechanistically, Vif hijacks a host cullin-5-RING E3 ubiquitin-protein ligase complex (ECS complex) and the transcription coactivator CBFB/CBF-beta to form an active E3 ubiquitin-protein ligase complex that targets APOBEC3G and APOBEC3F for polyubiquitination, leading to their degradation by the proteasome. Vif interaction with APOBEC3G also blocks its cytidine deaminase activity in a proteasome-independent manner, suggesting a dual inhibitory mechanism. May interact directly with APOBEC3G mRNA in order to inhibit its translation. Association with CBFB/CBF-beta also inhibits the transcription coactivator activity of CBFB/CBF-beta. Seems to play a role in viral morphology by affecting the stability of the viral nucleoprotein core. Finally, Vif also contributes to the G2 cell cycle arrest observed in HIV infected cells. This chain is Virion infectivity factor, found in Human immunodeficiency virus type 1 group M subtype D (isolate NDK) (HIV-1).